The chain runs to 139 residues: Ribonuclease VapC3 (139 aa).

In terms of domain architecture, PINc spans 14-121 (EAIVLDTGAF…VATDDYTLQR (108 aa)). Residue Asp-19 coordinates Mg(2+).

Belongs to the PINc/VapC protein family. The cofactor is Mg(2+).

Its function is as follows. Toxic component of a type II toxin-antitoxin (TA) system. An RNase. The chain is Ribonuclease VapC3 from Aeropyrum pernix (strain ATCC 700893 / DSM 11879 / JCM 9820 / NBRC 100138 / K1).